A 431-amino-acid chain; its full sequence is Translation initiation factor 2 subunit gamma (431 aa).

The 198-residue stretch at 26–223 (QPCVNIGMVG…ALETQIPTPS (198 aa)) folds into the tr-type G domain. The G1 stretch occupies residues 35 to 42 (GHVDHGKT). Positions 38, 42, 63, and 65 each coordinate Mg(2+). GTP is bound at residue 38-43 (DHGKTT). The G2 stretch occupies residues 63–67 (GISIR). The Zn(2+) site is built by C78, C81, C93, and C96. The G3 stretch occupies residues 110–113 (DAPG). Residues 166 to 169 (NKID) and 201 to 203 (SAQ) contribute to the GTP site. Residues 166 to 169 (NKID) form a G4 region. A G5 region spans residues 201–203 (SAQ).

Belongs to the TRAFAC class translation factor GTPase superfamily. Classic translation factor GTPase family. EIF2G subfamily. In terms of assembly, heterotrimer composed of an alpha, a beta and a gamma chain. It depends on Mg(2+) as a cofactor.

The enzyme catalyses GTP + H2O = GDP + phosphate + H(+). In terms of biological role, eIF-2 functions in the early steps of protein synthesis by forming a ternary complex with GTP and initiator tRNA. This is Translation initiation factor 2 subunit gamma from Methanosarcina mazei (strain ATCC BAA-159 / DSM 3647 / Goe1 / Go1 / JCM 11833 / OCM 88) (Methanosarcina frisia).